Consider the following 340-residue polypeptide: Porphobilinogen deaminase (340 aa).

Position 258 is an S-(dipyrrolylmethanemethyl)cysteine (C258).

The protein belongs to the HMBS family. Requires dipyrromethane as cofactor.

The enzyme catalyses 4 porphobilinogen + H2O = hydroxymethylbilane + 4 NH4(+). It participates in porphyrin-containing compound metabolism; protoporphyrin-IX biosynthesis; coproporphyrinogen-III from 5-aminolevulinate: step 2/4. Its function is as follows. Tetrapolymerization of the monopyrrole PBG into the hydroxymethylbilane pre-uroporphyrinogen in several discrete steps. This is Porphobilinogen deaminase (HEM3) from Candida albicans (strain SC5314 / ATCC MYA-2876) (Yeast).